We begin with the raw amino-acid sequence, 361 residues long: Peptide chain release factor 1 (361 aa).

An N5-methylglutamine modification is found at Q237.

The protein belongs to the prokaryotic/mitochondrial release factor family. Post-translationally, methylated by PrmC. Methylation increases the termination efficiency of RF1.

The protein localises to the cytoplasm. In terms of biological role, peptide chain release factor 1 directs the termination of translation in response to the peptide chain termination codons UAG and UAA. In Chromohalobacter salexigens (strain ATCC BAA-138 / DSM 3043 / CIP 106854 / NCIMB 13768 / 1H11), this protein is Peptide chain release factor 1.